A 332-amino-acid chain; its full sequence is Divalent cation transporter CmaX (332 aa).

Topologically, residues 1-277 (MQAYESGDER…MNRTMYLLGI (277 aa)) are cytoplasmic. The chain crosses the membrane as a helical span at residues 278–286 (ITGFFLPMS). At 287–307 (FVTGLLGINVGGIPGADAPHG) the chain is on the periplasmic side. The helical transmembrane segment at 308–323 (FWLACLLIGGVATFQW) threads the bilayer. Residues 324 to 332 (WVFRRLRWL) are Cytoplasmic-facing.

Belongs to the CorA metal ion transporter (MIT) (TC 1.A.35) family. As to quaternary structure, homopentamer.

The protein resides in the cell inner membrane. The enzyme catalyses Zn(2+)(in) = Zn(2+)(out). It carries out the reaction Cd(2+)(in) = Cd(2+)(out). The catalysed reaction is Ni(2+)(in) = Ni(2+)(out). It catalyses the reaction Co(2+)(in) = Co(2+)(out). Functionally, transports divalent cations including Zn(2+), Cd(2+), Ni(2+) and Co(2+). The proton gradient has a small influence on transport suggesting that the transport is probably not proton-dependent. This Pseudomonas aeruginosa (strain ATCC 15692 / DSM 22644 / CIP 104116 / JCM 14847 / LMG 12228 / 1C / PRS 101 / PAO1) protein is Divalent cation transporter CmaX.